Reading from the N-terminus, the 389-residue chain is Aspartate aminotransferase (389 aa).

L-aspartate contacts are provided by glycine 34 and asparagine 171. Residue lysine 233 is modified to N6-(pyridoxal phosphate)lysine. Arginine 362 lines the L-aspartate pocket.

It belongs to the class-I pyridoxal-phosphate-dependent aminotransferase family. In terms of assembly, homodimer. Pyridoxal 5'-phosphate is required as a cofactor.

The protein resides in the cytoplasm. The catalysed reaction is L-aspartate + 2-oxoglutarate = oxaloacetate + L-glutamate. In Pyrococcus abyssi (strain GE5 / Orsay), this protein is Aspartate aminotransferase (aspC).